A 255-amino-acid chain; its full sequence is MPKETLVVSKSEELAFEYFLSFNKFSSGSSSFLGQVTKASFFSSLASSGSKSSLNSLNNEFDHLSLYEIKNSSLETEKYKTILVVCDNTDEFYGEKGLSNLTLFHNSLLPNGKFVIAIPPNSSHEQEIKKEMMYSGLIDVVSSVYYFTTFITGVRPNWKSKTDKKSPSMIDAAPIDGYISKAPDYESCSTKPRACANCTCGRAEREKLNSTDLTSDVDAPTSSCGNCYLGDAFRCESCPYKGLPAFKPGEKVILD.

Residues 1-163 (MPKETLVVSK…VRPNWKSKTD (163 aa)) form an N-terminal SAM-like domain region. The tract at residues 164 to 185 (KKSPSMIDAAPIDGYISKAPDY) is linker. Residues cysteine 188, cysteine 195, cysteine 198, and cysteine 200 each coordinate [2Fe-2S] cluster. A fe-S binding site A region spans residues 188-200 (CSTKPRACANCTC). The [4Fe-4S] cluster site is built by cysteine 224, cysteine 227, cysteine 235, and cysteine 238. Short sequence motifs (cx2C motif) lie at residues 224–227 (CGNC) and 235–238 (CESC). The interval 224 to 238 (CGNCYLGDAFRCESC) is fe-S binding site B.

Belongs to the anamorsin family. As to quaternary structure, monomer. The cofactor is [2Fe-2S] cluster. [4Fe-4S] cluster serves as cofactor.

Its subcellular location is the cytoplasm. The protein resides in the mitochondrion intermembrane space. Its function is as follows. Component of the cytosolic iron-sulfur (Fe-S) protein assembly (CIA) machinery. Required for the maturation of extramitochondrial Fe-S proteins. Part of an electron transfer chain functioning in an early step of cytosolic Fe-S biogenesis, facilitating the de novo assembly of a [4Fe-4S] cluster on the cytosolic Fe-S scaffold complex. Electrons are transferred from NADPH via a FAD- and FMN-containing diflavin oxidoreductase. Together with the diflavin oxidoreductase, also required for the assembly of the diferric tyrosyl radical cofactor of ribonucleotide reductase (RNR), probably by providing electrons for reduction during radical cofactor maturation in the catalytic small subunit. The protein is Anamorsin homolog of Theileria annulata.